The sequence spans 534 residues: High-affinity nicotinic acid transporter (534 aa).

Residues 1 to 130 (MSNKFTMESP…DIHLVGTQYN (130 aa)) lie on the Extracellular side of the membrane. Positions 21–56 (SPTNDGSEEKPTEVTFQEDEGHDASLHNRSHDKKSE) are disordered. At S27 the chain carries Phosphoserine. A helical membrane pass occupies residues 131–151 (TCVTVFFATYVLFDPIGTNLL). K152 is a topological domain (cytoplasmic). The chain crosses the membrane as a helical span at residues 153-173 (IMGPPLMMSICLTCFGAISLG). At 174–187 (TAWVKNYAQLIVVR) the chain is on the extracellular side. A helical transmembrane segment spans residues 188 to 208 (LLLGAFEGMIYPAINMYLSVC). The Cytoplasmic portion of the chain corresponds to 209–217 (YRREQYALR). The chain crosses the membrane as a helical span at residues 218-238 (FAFVFSAACLSSSFGGLIAYG). Over 239–250 (CSKISGSLKDWQ) the chain is Extracellular. Residues 251 to 271 (YIYIVEGCISLGFVPFYAFGL) traverse the membrane as a helical segment. The Cytoplasmic segment spans residues 272-323 (SKNLEDSWFFNKEEKEYISERYKTMNTFDPDEKFEWFQVWQAVKDVKTWASA). K283 is covalently cross-linked (Glycyl lysine isopeptide (Lys-Gly) (interchain with G-Cter in ubiquitin)). The chain crosses the membrane as a helical span at residues 324–344 (VALFGIDLTTFGLTVFLPIII). The Extracellular segment spans residues 345–355 (TSMGFTNVRAQ). The helical transmembrane segment at 356 to 376 (LMTVPIYFLTAIVFFICAVWS) threads the bilayer. Residues 377–384 (DRIKLRSP) lie on the Cytoplasmic side of the membrane. A helical transmembrane segment spans residues 385-405 (FILGACLTTSIGIAIVLGSQV). The Extracellular portion of the chain corresponds to 406-410 (HGVRY). Residues 411-431 (FGVYILCMGIYVNAACNCLWL) form a helical membrane-spanning segment. Residues 432–444 (SGNTGNYFKRATA) lie on the Cytoplasmic side of the membrane. Residues 445–465 (LGINLFFGSGSGLVSGQIFVA) traverse the membrane as a helical segment. At 466–474 (KDKPRYIKG) the chain is on the extracellular side. Residues 475–495 (LSISLAFQVFSIFMTVVQIFL) form a helical membrane-spanning segment. Residues 496 to 534 (YKRENDKKKAIIDRCNELGEPIPYDERLSDKNPEFKYMY) lie on the Cytoplasmic side of the membrane.

The protein belongs to the major facilitator superfamily. Allantoate permease family.

The protein localises to the membrane. Its function is as follows. Involved in the uptake of nicotinic acid. This chain is High-affinity nicotinic acid transporter (TNA1), found in Saccharomyces cerevisiae (strain ATCC 204508 / S288c) (Baker's yeast).